Reading from the N-terminus, the 154-residue chain is Anti-sigma-E factor RseA (154 aa).

A Phosphothreonine; by PknB modification is found at threonine 39. The Zn(2+) site is built by histidine 66, cysteine 70, and cysteine 73. The segment at 104–154 (SEIPRCPPEGPSKGSSGGSSQGPPDGAAAGFGDRFADGDGGNRGRQSRVRR) is disordered. Residues 124–136 (QGPPDGAAAGFGD) show a composition bias toward low complexity.

This sequence belongs to the zinc-associated anti-sigma factor (ZAS) superfamily. Interacts with cognate ECF RNA polymerase sigma factor SigE under reducing conditions; this inhibits the interaction of SigE with the RNA polymerase catalytic core. It depends on Zn(2+) as a cofactor. Post-translationally, phosphorylated by PknB on Thr-39; can be dephosphorylated (at least in vitro) by PstP. Phosphorylation is the signal for subsequent degradation by the ClpC1-ClpP2 complex. Degraded following vancomycin treatment (surface stress) by a ClpC1-ClpP2 complex.

It localises to the cytoplasm. In terms of biological role, an anti-sigma factor for extracytoplasmic function (ECF) sigma factor SigE. ECF sigma factors are held in an inactive form by an anti-sigma factor. The polypeptide is Anti-sigma-E factor RseA (rseA) (Mycobacterium tuberculosis (strain ATCC 25618 / H37Rv)).